We begin with the raw amino-acid sequence, 160 residues long: Small ribosomal subunit protein bS16 (160 aa).

Positions Gly-115–Ser-139 are disordered. A compositionally biased stretch (basic residues) spans Pro-124 to Ala-134.

Belongs to the bacterial ribosomal protein bS16 family.

This chain is Small ribosomal subunit protein bS16, found in Mycobacterium leprae (strain Br4923).